The chain runs to 1086 residues: Tyrosine-protein kinase receptor svh-2 (1086 aa).

The first 34 residues, M1–G34, serve as a signal peptide directing secretion. The Extracellular segment spans residues G35–K651. 5 N-linked (GlcNAc...) asparagine glycosylation sites follow: N276, N299, N461, N554, and N617. The chain crosses the membrane as a helical span at residues I652–Y672. Over M673 to V1086 the chain is Cytoplasmic. The region spanning V735–V996 is the Protein kinase domain. ATP is bound by residues I741–V749 and K767. D858 (proton acceptor) is an active-site residue. Y890 carries the post-translational modification Phosphotyrosine. A disordered region spans residues A1056–V1086. The segment covering D1061–V1086 has biased composition (polar residues).

Belongs to the protein kinase superfamily. Tyr protein kinase family. Interacts (via cytoplasmic domain) with mlk-1. Interacts with shc-1 (via SH2 domain). May interact (when tyrosine-phosphorylated) with tns-1 (via SH2 domain). Post-translationally, may be autophosphorylated on Tyr-890 following dimerization. As to expression, expressed in body wall and vulva muscles, pharynx, intestine, excretory canals, distal tip cells and some neurons. Expressed in D-type motor neurons upon axon injury.

It localises to the cell membrane. It catalyses the reaction L-tyrosyl-[protein] + ATP = O-phospho-L-tyrosyl-[protein] + ADP + H(+). Functionally, receptor tyrosine kinase which may phosphorylate mlk-1, a component of the mlk-1, mek-1 and kgb-1 pathway. Involved in axon regeneration after injury by promoting the generation of productive and stable growth cones. This chain is Tyrosine-protein kinase receptor svh-2, found in Caenorhabditis elegans.